The chain runs to 341 residues: Aromatic amino acid aminotransferase (341 aa).

K213 is subject to N6-(pyridoxal phosphate)lysine.

Belongs to the class-II pyridoxal-phosphate-dependent aminotransferase family. As to quaternary structure, homodimer. The cofactor is pyridoxal 5'-phosphate.

The enzyme catalyses an aromatic L-alpha-amino acid + 2-oxoglutarate = an aromatic oxo-acid + L-glutamate. Its function is as follows. Aminotransferase that catalyzes the conversion of aromatic amino acids and 2-oxoglutarate into corresponding aromatic oxo acids and L-glutamate. The polypeptide is Aromatic amino acid aminotransferase (Corynebacterium glutamicum (strain R)).